Consider the following 276-residue polypeptide: uncharacterized protein (276 aa).

It to E.cuniculi ECU05_1600/ECU11_0130.

This is an uncharacterized protein from Encephalitozoon cuniculi (strain GB-M1) (Microsporidian parasite).